The following is a 226-amino-acid chain: Urease accessory protein UreF (226 aa).

The protein belongs to the UreF family. As to quaternary structure, ureD, UreF and UreG form a complex that acts as a GTP-hydrolysis-dependent molecular chaperone, activating the urease apoprotein by helping to assemble the nickel containing metallocenter of UreC. The UreE protein probably delivers the nickel.

It is found in the cytoplasm. Its function is as follows. Required for maturation of urease via the functional incorporation of the urease nickel metallocenter. This Corynebacterium glutamicum (strain R) protein is Urease accessory protein UreF.